A 1071-amino-acid chain; its full sequence is Carbamoyl phosphate synthase large chain (1071 aa).

A carboxyphosphate synthetic domain region spans residues Met1–Glu403. Arg129, Arg169, Gly175, Gly176, Gln208, Val210, Glu215, Gly241, Val242, His243, Gln285, and Glu299 together coordinate ATP. In terms of domain architecture, ATP-grasp 1 spans Lys133–Val328. Mg(2+)-binding residues include Gln285, Glu299, and Asn301. Gln285, Glu299, and Asn301 together coordinate Mn(2+). The segment at Thr404 to Ser548 is oligomerization domain. The interval Arg549–Gly930 is carbamoyl phosphate synthetic domain. Positions Gln673–Ala864 constitute an ATP-grasp 2 domain. Positions 709, 748, 750, 755, 780, 781, 782, 783, 823, and 835 each coordinate ATP. Mg(2+) is bound by residues Gln823, Glu835, and Asn837. Mn(2+)-binding residues include Gln823, Glu835, and Asn837. Residues Glu931–Asn1071 enclose the MGS-like domain. The segment at Glu931 to Asn1071 is allosteric domain.

This sequence belongs to the CarB family. Composed of two chains; the small (or glutamine) chain promotes the hydrolysis of glutamine to ammonia, which is used by the large (or ammonia) chain to synthesize carbamoyl phosphate. Tetramer of heterodimers (alpha,beta)4. The cofactor is Mg(2+). It depends on Mn(2+) as a cofactor.

It carries out the reaction hydrogencarbonate + L-glutamine + 2 ATP + H2O = carbamoyl phosphate + L-glutamate + 2 ADP + phosphate + 2 H(+). The enzyme catalyses hydrogencarbonate + NH4(+) + 2 ATP = carbamoyl phosphate + 2 ADP + phosphate + 2 H(+). Its pathway is amino-acid biosynthesis; L-arginine biosynthesis; carbamoyl phosphate from bicarbonate: step 1/1. The protein operates within pyrimidine metabolism; UMP biosynthesis via de novo pathway; (S)-dihydroorotate from bicarbonate: step 1/3. In terms of biological role, large subunit of the glutamine-dependent carbamoyl phosphate synthetase (CPSase). CPSase catalyzes the formation of carbamoyl phosphate from the ammonia moiety of glutamine, carbonate, and phosphate donated by ATP, constituting the first step of 2 biosynthetic pathways, one leading to arginine and/or urea and the other to pyrimidine nucleotides. The large subunit (synthetase) binds the substrates ammonia (free or transferred from glutamine from the small subunit), hydrogencarbonate and ATP and carries out an ATP-coupled ligase reaction, activating hydrogencarbonate by forming carboxy phosphate which reacts with ammonia to form carbamoyl phosphate. The polypeptide is Carbamoyl phosphate synthase large chain (Neisseria meningitidis serogroup B (strain ATCC BAA-335 / MC58)).